Here is a 417-residue protein sequence, read N- to C-terminus: S-adenosylmethionine synthase (417 aa).

An ATP-binding site is contributed by histidine 16. Aspartate 18 contacts Mg(2+). Glutamate 44 contacts K(+). Glutamate 57 and glutamine 100 together coordinate L-methionine. The tract at residues 100–110 (QSPDIAQGVTS) is flexible loop. ATP contacts are provided by residues 175–177 (DGK), 251–252 (KF), aspartate 260, 266–267 (RK), alanine 283, and lysine 287. Position 260 (aspartate 260) interacts with L-methionine. Lysine 291 lines the L-methionine pocket.

Belongs to the AdoMet synthase family. In terms of assembly, homotetramer; dimer of dimers. Mg(2+) serves as cofactor. K(+) is required as a cofactor.

Its subcellular location is the cytoplasm. It carries out the reaction L-methionine + ATP + H2O = S-adenosyl-L-methionine + phosphate + diphosphate. Its pathway is amino-acid biosynthesis; S-adenosyl-L-methionine biosynthesis; S-adenosyl-L-methionine from L-methionine: step 1/1. Its function is as follows. Catalyzes the formation of S-adenosylmethionine (AdoMet) from methionine and ATP. The overall synthetic reaction is composed of two sequential steps, AdoMet formation and the subsequent tripolyphosphate hydrolysis which occurs prior to release of AdoMet from the enzyme. This Picosynechococcus sp. (strain ATCC 27264 / PCC 7002 / PR-6) (Agmenellum quadruplicatum) protein is S-adenosylmethionine synthase.